The sequence spans 315 residues: Glutathione synthetase (315 aa).

The 186-residue stretch at 125–310 folds into the ATP-grasp domain; sequence KLFTAWFSDL…ITGMLMDAIE (186 aa). 151–207 is a binding site for ATP; it reads WEKHSDIILKPLDGMGGASIFRVKEGDPNLGVIAETLTEHGTRYCMAQNYLPAIKDG. Mg(2+)-binding residues include glutamate 281 and asparagine 283.

This sequence belongs to the prokaryotic GSH synthase family. Mg(2+) serves as cofactor. The cofactor is Mn(2+).

It carries out the reaction gamma-L-glutamyl-L-cysteine + glycine + ATP = glutathione + ADP + phosphate + H(+). Its pathway is sulfur metabolism; glutathione biosynthesis; glutathione from L-cysteine and L-glutamate: step 2/2. The polypeptide is Glutathione synthetase (Escherichia coli O157:H7).